The sequence spans 249 residues: MRQKIVAGNWKMNGQIQQVTELVSQIEKLIGFDCAAQVAVMPPSIYIPKVRDCLRTGKIVVGAQNVYPKDYGAYTGELSAPMLKDFDCRYVLVGHSERRQFFHEDENFVAQKFHHVKDHGMIPVLCVGETLSERENGKTEQVIAQQVLAVSAKGKDCFRDCVVAYEPVWAIGTGKTATPEQAQKIHQFIRDLVGEINDSDAKHLTLIYGGSVNENNAKALFSMPDIDGGLVGGASLNAKQFVEIVKCIN.

9–11 lines the substrate pocket; it reads NWK. Residue His-95 is the Electrophile of the active site. Glu-166 functions as the Proton acceptor in the catalytic mechanism. Substrate is bound by residues Gly-172, Ser-211, and 232–233; that span reads GG.

The protein belongs to the triosephosphate isomerase family. In terms of assembly, homodimer.

Its subcellular location is the cytoplasm. The enzyme catalyses D-glyceraldehyde 3-phosphate = dihydroxyacetone phosphate. Its pathway is carbohydrate biosynthesis; gluconeogenesis. The protein operates within carbohydrate degradation; glycolysis; D-glyceraldehyde 3-phosphate from glycerone phosphate: step 1/1. In terms of biological role, involved in the gluconeogenesis. Catalyzes stereospecifically the conversion of dihydroxyacetone phosphate (DHAP) to D-glyceraldehyde-3-phosphate (G3P). This chain is Triosephosphate isomerase, found in Legionella pneumophila (strain Lens).